The primary structure comprises 331 residues: Proline-rich protein 33 (331 aa).

3 disordered regions span residues 1–112 (MGPQ…SVPR), 128–185 (SLES…PKVA), and 204–247 (APEP…APAS). The span at 94–105 (PEEPPVPRPPPG) shows a compositional bias: pro residues. Over residues 149–169 (PPMAGPAAEAERVSSPAWASS) the composition is skewed to low complexity. Over residues 170 to 185 (PTPPSGPHPCPVPKVA) the composition is skewed to pro residues. Residues 217 to 238 (EPEVPTPTEQEVPAPTEQEVPA) are compositionally biased toward low complexity.

This is Proline-rich protein 33 (PRR33) from Homo sapiens (Human).